Consider the following 125-residue polypeptide: Small ribosomal subunit protein uS17 (125 aa).

Disordered stretches follow at residues 1–21 (MSSS…VSSR) and 101–125 (VAAQ…APQA).

The protein belongs to the universal ribosomal protein uS17 family. As to quaternary structure, part of the 30S ribosomal subunit.

Its function is as follows. One of the primary rRNA binding proteins, it binds specifically to the 5'-end of 16S ribosomal RNA. In Opitutus terrae (strain DSM 11246 / JCM 15787 / PB90-1), this protein is Small ribosomal subunit protein uS17.